Consider the following 137-residue polypeptide: Basic phospholipase A2 homolog APL-K49 (137 aa).

The signal sequence occupies residues 1 to 16 (MRTLWIVALLLVGVEG). Intrachain disulfides connect Cys-42–Cys-131, Cys-44–Cys-60, Cys-59–Cys-111, Cys-65–Cys-137, Cys-66–Cys-104, Cys-73–Cys-97, and Cys-91–Cys-102. Residues 121–133 (KKYKAYFKLKCKK) are important for membrane-damaging activities in eukaryotes and bacteria; heparin-binding.

The protein belongs to the phospholipase A2 family. Group II subfamily. K49 sub-subfamily. As to quaternary structure, monomer. In terms of tissue distribution, expressed by the venom gland.

The protein localises to the secreted. Snake venom phospholipase A2 (PLA2) that lacks enzymatic activity. Does not show antibacterial activity. Is myotoxic and displays edema-inducing activities. A model of myotoxic mechanism has been proposed: an apo Lys49-PLA2 is activated by the entrance of a hydrophobic molecule (e.g. fatty acid) at the hydrophobic channel of the protein leading to a reorientation of a monomer. This reorientation causes a transition between 'inactive' to 'active' states, causing alignment of C-terminal and membrane-docking sites (MDoS) side-by-side and putting the membrane-disruption sites (MDiS) in the same plane, exposed to solvent and in a symmetric position for both monomers. The MDoS region stabilizes the toxin on membrane by the interaction of charged residues with phospholipid head groups. Subsequently, the MDiS region destabilizes the membrane with penetration of hydrophobic residues. This insertion causes a disorganization of the membrane, allowing an uncontrolled influx of ions (i.e. calcium and sodium), and eventually triggering irreversible intracellular alterations and cell death. This Agkistrodon piscivorus leucostoma (Western cottonmouth) protein is Basic phospholipase A2 homolog APL-K49.